A 58-amino-acid chain; its full sequence is Large ribosomal subunit protein bL32 (58 aa).

Belongs to the bacterial ribosomal protein bL32 family.

This chain is Large ribosomal subunit protein bL32, found in Prochlorococcus marinus (strain MIT 9303).